Here is an 877-residue protein sequence, read N- to C-terminus: SRP-independent targeting protein 1 (877 aa).

A phosphoserine mark is found at S309, S310, S311, S332, and S334. Disordered regions lie at residues 369–414 (LRKQ…PSND), 446–521 (DDYT…DVLS), and 550–579 (KPFNQKFPNSQQPDSAGASSPKRSTSSNHF). A compositionally biased stretch (low complexity) spans 389–402 (RSQSYSSSNMSRSP). The stretch at 412-441 (SNDELVYDELNNQINEVQDRAKNEEIVLYN) forms a coiled coil. Basic and acidic residues predominate over residues 447–462 (DYTKERGEQEQDRTSY). The segment covering 470–501 (YDDEEGGNEDNYDDDEDDDDDDDDDDESDDEG) has biased composition (acidic residues). Composition is skewed to polar residues over residues 510–521 (LSRSGSSTDVLS) and 551–579 (PFNQKFPNSQQPDSAGASSPKRSTSSNHF). Glycyl lysine isopeptide (Lys-Gly) (interchain with G-Cter in ubiquitin) cross-links involve residues K668 and K670. Residues S692, S694, and S706 each carry the phosphoserine modification. The interval 773 to 815 (SLPKEREDDNDSTNSTIVPNHPDNDNYNDNDNDNNTGINSNNF) is disordered. A compositionally biased stretch (low complexity) spans 805-815 (DNNTGINSNNF). Phosphoserine is present on S841.

As to quaternary structure, interacts with ENV10/SND2.

The protein resides in the cytoplasm. In terms of biological role, functions in the SND pathway, a SRP (signal recognition particle) and GET (guided entry of tail-anchored proteins) independent pathway for targeting a broad range of substrate proteins to the endoplasmic reticulum. SND functions in parallel to GET in targeting proteins with downstream hydrophobic motifs. The chain is SRP-independent targeting protein 1 from Saccharomyces cerevisiae (strain ATCC 204508 / S288c) (Baker's yeast).